Reading from the N-terminus, the 361-residue chain is Peptide chain release factor 1 (361 aa).

The residue at position 237 (glutamine 237) is an N5-methylglutamine. The interval 287–306 (KRAAEEASTRKSLVGSGDRS) is disordered.

It belongs to the prokaryotic/mitochondrial release factor family. Methylated by PrmC. Methylation increases the termination efficiency of RF1.

The protein localises to the cytoplasm. Functionally, peptide chain release factor 1 directs the termination of translation in response to the peptide chain termination codons UAG and UAA. The protein is Peptide chain release factor 1 of Alteromonas mediterranea (strain DSM 17117 / CIP 110805 / LMG 28347 / Deep ecotype).